We begin with the raw amino-acid sequence, 290 residues long: uncharacterized protein (290 aa).

The next 5 helical transmembrane spans lie at 10–27 (FFVA…LLLI), 32–54 (VNYI…YFFS), 69–91 (ILVP…GVLI), 100–117 (VLAG…FFYF), and 121–143 (YLLM…NFEY). Residues 147-183 (VGKERKRILKLKKNYHKLLKEFSNFEREKRMFSNLRK) adopt a coiled-coil conformation.

The protein localises to the cell membrane. This is an uncharacterized protein from Aquifex aeolicus (strain VF5).